The sequence spans 225 residues: UPF0758 protein SEQ_1136 (225 aa).

The MPN domain maps to 102 to 224 (PVLSSAQVAE…YYSFREKSDL (123 aa)). Residues H173, H175, and D186 each coordinate Zn(2+). The short motif at 173-186 (HNHPSGLTKPSAND) is the JAMM motif element.

Belongs to the UPF0758 family.

The chain is UPF0758 protein SEQ_1136 from Streptococcus equi subsp. equi (strain 4047).